We begin with the raw amino-acid sequence, 1118 residues long: DNA mismatch repair protein MSH1, mitochondrial (1118 aa).

Residue 768–775 (GPNGGGKS) participates in ATP binding.

Belongs to the DNA mismatch repair MutS family.

The protein resides in the mitochondrion. Its subcellular location is the plastid. The protein localises to the chloroplast. Functionally, DNA mismatch repair protein specifically involved in maintenance of mitochondrial genome configuration by controlling specific rearranged portion. Functions by suppressing asymmetric recombination at some repeat pairs. The chain is DNA mismatch repair protein MSH1, mitochondrial (MSH1) from Arabidopsis thaliana (Mouse-ear cress).